A 234-amino-acid chain; its full sequence is Uracil-DNA glycosylase (234 aa).

The Proton acceptor role is filled by Asp-68.

Belongs to the uracil-DNA glycosylase (UDG) superfamily. UNG family.

It localises to the cytoplasm. The catalysed reaction is Hydrolyzes single-stranded DNA or mismatched double-stranded DNA and polynucleotides, releasing free uracil.. Excises uracil residues from the DNA which can arise as a result of misincorporation of dUMP residues by DNA polymerase or due to deamination of cytosine. The polypeptide is Uracil-DNA glycosylase (Ruegeria sp. (strain TM1040) (Silicibacter sp.)).